A 242-amino-acid polypeptide reads, in one-letter code: Small ribosomal subunit protein eS6 (242 aa).

Over residues 219–229 the composition is skewed to basic and acidic residues; sequence EKKSEKAEEKK. Residues 219–242 form a disordered region; it reads EKKSEKAEEKKRRASSLRTQSVQA. Phosphoserine occurs at positions 233 and 234.

The protein belongs to the eukaryotic ribosomal protein eS6 family. Phosphorylated.

The sequence is that of Small ribosomal subunit protein eS6 (RPS6) from Yarrowia lipolytica (strain CLIB 122 / E 150) (Yeast).